The primary structure comprises 339 residues: D-erythrose-4-phosphate dehydrogenase (339 aa).

NAD(+) is bound at residue 11–12 (RI). Residues 158–160 (SCT), arginine 204, 217–218 (TK), and arginine 240 each bind substrate. Cysteine 159 serves as the catalytic Nucleophile. Asparagine 322 serves as a coordination point for NAD(+).

Belongs to the glyceraldehyde-3-phosphate dehydrogenase family. Epd subfamily. As to quaternary structure, homotetramer.

It is found in the cytoplasm. The catalysed reaction is D-erythrose 4-phosphate + NAD(+) + H2O = 4-phospho-D-erythronate + NADH + 2 H(+). The protein operates within cofactor biosynthesis; pyridoxine 5'-phosphate biosynthesis; pyridoxine 5'-phosphate from D-erythrose 4-phosphate: step 1/5. In terms of biological role, catalyzes the NAD-dependent conversion of D-erythrose 4-phosphate to 4-phosphoerythronate. This is D-erythrose-4-phosphate dehydrogenase from Aliivibrio salmonicida (strain LFI1238) (Vibrio salmonicida (strain LFI1238)).